A 768-amino-acid chain; its full sequence is Ribonucleoside-diphosphate reductase large chain (768 aa).

Residues 7–8 (SK) and 13–19 (EKLGIDL) contribute to the ATP site. GDP contacts are provided by T196 and S211. The cysteines at positions 212 and 437 are disulfide-linked. DTTP is bound by residues 220–222 (DSI), K237, and R250. Residue N420 participates in GDP binding. The active-site Proton acceptor is N420. The active-site Cysteine radical intermediate is the C422. Residue E424 participates in GDP binding. E424 functions as the Proton acceptor in the catalytic mechanism.

The protein belongs to the ribonucleoside diphosphate reductase large chain family. Heterodimer of a large and a small subunit.

It carries out the reaction a 2'-deoxyribonucleoside 5'-diphosphate + [thioredoxin]-disulfide + H2O = a ribonucleoside 5'-diphosphate + [thioredoxin]-dithiol. Its activity is regulated as follows. Under complex allosteric control mediated by deoxynucleoside triphosphates and ATP binding to separate specificity and activation sites on the large subunit. The type of nucleotide bound at the specificity site determines substrate preference. It seems probable that ATP makes the enzyme reduce CDP and UDP, dGTP favors ADP reduction and dTTP favors GDP reduction. Stimulated by ATP and inhibited by dATP binding to the activity site. Its function is as follows. Provides the precursors necessary for DNA synthesis. Catalyzes the biosynthesis of deoxyribonucleotides from the corresponding ribonucleotides. In Encephalitozoon cuniculi (strain GB-M1) (Microsporidian parasite), this protein is Ribonucleoside-diphosphate reductase large chain.